The sequence spans 140 residues: Histone H3-like centromeric protein A (140 aa).

The tract at residues 1–46 (MGPRRRSRKPEAPRRRSPSPTPTPGPSRRGPSLGASSHQHSRRRQG) is disordered. Position 2 is a n,N,N-trimethylglycine (G2). The residue at position 7 (S7) is a Phosphoserine; by AURKA and AURKB. Phosphoserine occurs at positions 17, 19, and 27. The span at 26-37 (PSRRGPSLGASS) shows a compositional bias: low complexity. Positions 39-54 (QHSRRRQGWLKEIRKL) are important for flexibility of DNA ends that protrude from nucleosomes. S68 is subject to Phosphoserine. The interval 75-116 (CVKFTRGVDFNWQAQALLALQEAAEAFLVHLFEDAYLLTLHA) is CATD.

Belongs to the histone H3 family. Component of centromeric nucleosomes, where DNA is wrapped around a histone octamer core. The octamer contains two molecules each of H2A, H2B, CENPA and H4 assembled in one CENPA-H4 heterotetramer and two H2A-H2B heterodimers. CENPA modulates the DNA-binding characteristics of nucleosomes so that protruding DNA ends have higher flexibility than in nucleosomes containing conventional histone H3. Inhibits binding of histone H1 to nucleosomes, since histone H1 binds preferentially to rigid DNA linkers that protrude from nucleosomes. Nucleosomes containing CENPA also contain histone H2A variants such as MACROH2A and H2A.Z/H2AZ1. The CENPA-H4 heterotetramer is more compact and structurally more rigid than corresponding H3-H4 heterotetramers. Can assemble into nucleosomes that contain both CENPA and histone H3.3; these nucleosomes interact with a single CENPC chain. Heterotrimer composed of HJURP, CENPA and histone H4, where HJURP interacts with the dimer formed by CENPA and histone H4 and prevents tetramerization of CENPA and H4. Component of the CENPA-NAC complex, at least composed of CENPA, CENPC, CENPH, CENPM, CENPN, CENPT and CENPU. Interacts (via CATD domain) with HJURP; the interaction is direct and is required for its localization to centromeres. Interacts with CENPC, CENPN and CENPT; interaction is direct. Part of a centromere complex consisting of CENPA, CENPT and CENPW. Identified in centromere complexes containing histones H2A, H2B and H4, and at least CENPA, CENPB, CENPC, CENPT, CENPN, HJURP, SUPT16H, SSRP1 and RSF1. Can self-associate. The CENPA-H4 heterotetramer can bind DNA by itself (in vitro). Interacts with CDK1, PPP1CA and RBBP7. As to quaternary structure, (Microbial infection) Interacts directly with herpes virus HHV-1 protein ICP0. Ubiquitinated. Interaction with herpes virus HSV-1 ICP0 protein, leads to its degradation by the proteasome pathway. Post-translationally, trimethylated by NTMT1 at the N-terminal glycine after cleavage of Met-1. Methylation is low before incorporation into nucleosomes and increases with cell cycle progression, with the highest levels in mitotic nucleosomes. In terms of processing, phosphorylated by CDK1 at Ser-68 during early mitosis; this abolishes association with chromatin and centromeres, prevents interaction with HJURP and thereby prevents premature assembly of CENPA into centromeres. Dephosphorylated at Ser-68 by PPP1CA during late mitosis. Phosphorylation of Ser-7 by AURKA and AURKB during prophase is required for localization of AURKA and AURKB at inner centromere and is essential for normal cytokinesis. Initial phosphorylation during prophase is mediated by AURKA and is maintained by AURKB. Poly-ADP-ribosylated by PARP1.

Its subcellular location is the nucleus. It localises to the chromosome. The protein localises to the centromere. Its function is as follows. Histone H3-like nucleosomal protein that is specifically found in centromeric nucleosomes. Replaces conventional H3 in the nucleosome core of centromeric chromatin that serves as an assembly site for the inner kinetochore. The presence of CENPA subtly modifies the nucleosome structure and the way DNA is wrapped around the nucleosome and gives rise to protruding DNA ends that are less well-ordered and rigid compared to nucleosomes containing histone H3. May serve as an epigenetic mark that propagates centromere identity through replication and cell division. Required for recruitment and assembly of kinetochore proteins, and as a consequence required for progress through mitosis, chromosome segregation and cytokinesis. This is Histone H3-like centromeric protein A (CENPA) from Homo sapiens (Human).